We begin with the raw amino-acid sequence, 176 residues long: dCTP deaminase (176 aa).

Residues 102-107 (RSTFAR) and D118 contribute to the dCTP site. E128 functions as the Proton donor/acceptor in the catalytic mechanism. DCTP contacts are provided by Y160 and Q167.

Belongs to the dCTP deaminase family. In terms of assembly, homotrimer.

It catalyses the reaction dCTP + H2O + H(+) = dUTP + NH4(+). It functions in the pathway pyrimidine metabolism; dUMP biosynthesis; dUMP from dCTP (dUTP route): step 1/2. Catalyzes the deamination of dCTP to dUTP. This chain is dCTP deaminase, found in Hyperthermus butylicus (strain DSM 5456 / JCM 9403 / PLM1-5).